Consider the following 352-residue polypeptide: Nicotinate-nucleotide--dimethylbenzimidazole phosphoribosyltransferase (352 aa).

The active-site Proton acceptor is Glu316.

It belongs to the CobT family.

It catalyses the reaction 5,6-dimethylbenzimidazole + nicotinate beta-D-ribonucleotide = alpha-ribazole 5'-phosphate + nicotinate + H(+). The protein operates within nucleoside biosynthesis; alpha-ribazole biosynthesis; alpha-ribazole from 5,6-dimethylbenzimidazole: step 1/2. Functionally, catalyzes the synthesis of alpha-ribazole-5'-phosphate from nicotinate mononucleotide (NAMN) and 5,6-dimethylbenzimidazole (DMB). The sequence is that of Nicotinate-nucleotide--dimethylbenzimidazole phosphoribosyltransferase from Ruminiclostridium cellulolyticum (strain ATCC 35319 / DSM 5812 / JCM 6584 / H10) (Clostridium cellulolyticum).